The following is a 394-amino-acid chain: Phosphoglycerate kinase (394 aa).

Substrate-binding positions include 21-23 (DLN), Arg-36, 59-62 (HLGR), Arg-113, and Arg-146. Residues Lys-197, Glu-319, and 345-348 (GGDT) contribute to the ATP site.

The protein belongs to the phosphoglycerate kinase family. As to quaternary structure, monomer.

The protein localises to the cytoplasm. The enzyme catalyses (2R)-3-phosphoglycerate + ATP = (2R)-3-phospho-glyceroyl phosphate + ADP. It participates in carbohydrate degradation; glycolysis; pyruvate from D-glyceraldehyde 3-phosphate: step 2/5. The sequence is that of Phosphoglycerate kinase from Halorhodospira halophila (strain DSM 244 / SL1) (Ectothiorhodospira halophila (strain DSM 244 / SL1)).